A 157-amino-acid chain; its full sequence is Large ribosomal subunit protein eL21 (157 aa).

Positions 110–132 (QANDQAKAEGNKAGKRVSTKRNP) are disordered.

This sequence belongs to the eukaryotic ribosomal protein eL21 family.

The polypeptide is Large ribosomal subunit protein eL21 (RPL21) (Tetrahymena thermophila (strain SB210)).